Here is a 453-residue protein sequence, read N- to C-terminus: MEKPSLPKGTRDFGPAQMLKRQYLLQTIREIFTKYGFLPIETPAMENLSVLTGKYGDEGDQLIYKILNSGDFIQGVEQNHLQEGYKKLIPKISKKALRYDLTVPFARHVVMNRNDITFPFKRYQIQPVWRADRPQKGRYCEFMQCDADVVGTDSLLCEAEIVLMIHEAFAALGITDFVVKINNRKILSGIADAIGKEGSEAELCVAIDKLDKIGKEAVLEELKTKGFTDSQLTRLLPVFDLKGNNAEIFPLLRTILAQSSVGLKGIDELEKVFTLIEKSGLGNASIETDLTLARGLSYYTGAIFEVKILNVQMGSVCGGGRYDNLTGVFGLPNVSGVGISFGIDRIYDVMNELNLFPSQESNSTRLLICAFDENTFMHALPMVTKLRAQGINTELYPDPVKIKKQLSYADDKKIPFALLIGEDEMNQGLYSLKNLISGEQFKVTFDEVVHKLI.

The protein belongs to the class-II aminoacyl-tRNA synthetase family. As to quaternary structure, homodimer.

It localises to the cytoplasm. It carries out the reaction tRNA(His) + L-histidine + ATP = L-histidyl-tRNA(His) + AMP + diphosphate + H(+). The protein is Histidine--tRNA ligase of Cytophaga hutchinsonii (strain ATCC 33406 / DSM 1761 / CIP 103989 / NBRC 15051 / NCIMB 9469 / D465).